The following is a 398-amino-acid chain: Cysteine desulfurase (398 aa).

Pyridoxal 5'-phosphate is bound by residues 74 to 75 (GT), Asn155, Gln182, and 202 to 204 (CGH). At Lys205 the chain carries N6-(pyridoxal phosphate)lysine. Basic and acidic residues predominate over residues 230–244 (GHQERSRRAGNGERA). The segment at 230–253 (GHQERSRRAGNGERAGHRRAGGGA) is disordered. Cys327 acts as the Cysteine persulfide intermediate in catalysis. Cys327 is a [2Fe-2S] cluster binding site.

The protein belongs to the class-V pyridoxal-phosphate-dependent aminotransferase family. NifS/IscS subfamily. Homodimer. It depends on pyridoxal 5'-phosphate as a cofactor.

The enzyme catalyses (sulfur carrier)-H + L-cysteine = (sulfur carrier)-SH + L-alanine. In terms of biological role, catalyzes the removal of elemental sulfur atoms from cysteine to produce alanine. Seems to participate in the biosynthesis of the nitrogenase metalloclusters by providing the inorganic sulfur required for the Fe-S core formation. In Azospirillum brasilense, this protein is Cysteine desulfurase.